Consider the following 411-residue polypeptide: Serine hydroxymethyltransferase (411 aa).

Residues leucine 119 and 123–125 (GHL) each bind (6S)-5,6,7,8-tetrahydrofolate. Residue lysine 228 is modified to N6-(pyridoxal phosphate)lysine. Residue 351–353 (SPF) coordinates (6S)-5,6,7,8-tetrahydrofolate.

The protein belongs to the SHMT family. As to quaternary structure, homodimer. The cofactor is pyridoxal 5'-phosphate.

It localises to the cytoplasm. It catalyses the reaction (6R)-5,10-methylene-5,6,7,8-tetrahydrofolate + glycine + H2O = (6S)-5,6,7,8-tetrahydrofolate + L-serine. The protein operates within one-carbon metabolism; tetrahydrofolate interconversion. It participates in amino-acid biosynthesis; glycine biosynthesis; glycine from L-serine: step 1/1. Its function is as follows. Catalyzes the reversible interconversion of serine and glycine with tetrahydrofolate (THF) serving as the one-carbon carrier. This reaction serves as the major source of one-carbon groups required for the biosynthesis of purines, thymidylate, methionine, and other important biomolecules. Also exhibits THF-independent aldolase activity toward beta-hydroxyamino acids, producing glycine and aldehydes, via a retro-aldol mechanism. This is Serine hydroxymethyltransferase from Clostridium beijerinckii (strain ATCC 51743 / NCIMB 8052) (Clostridium acetobutylicum).